We begin with the raw amino-acid sequence, 201 residues long: UPF0056 membrane protein PH0760 (201 aa).

6 consecutive transmembrane segments (helical) span residues 8–28 (FMIL…VPVF), 49–69 (ITVF…FKFF), 73–93 (IDAF…EMLS), 111–131 (VAVI…TTVM), 140–160 (GIVI…LYSG), and 181–201 (LILT…AFGI).

Belongs to the UPF0056 (MarC) family.

Its subcellular location is the cell membrane. The protein is UPF0056 membrane protein PH0760 of Pyrococcus horikoshii (strain ATCC 700860 / DSM 12428 / JCM 9974 / NBRC 100139 / OT-3).